Here is a 96-residue protein sequence, read N- to C-terminus: uncharacterized protein (96 aa).

This is an uncharacterized protein from Escherichia coli (strain K12).